Reading from the N-terminus, the 289-residue chain is Oxaloacetate decarboxylase (289 aa).

Ser50 is a substrate binding site. Residue Asp88 participates in Mg(2+) binding. Residues Arg159 and His235 each contribute to the substrate site.

The protein belongs to the isocitrate lyase/PEP mutase superfamily. Oxaloacetate decarboxylase family. In terms of assembly, homotetramer; dimer of dimers. Mg(2+) is required as a cofactor.

It catalyses the reaction oxaloacetate + H(+) = pyruvate + CO2. Functionally, catalyzes the decarboxylation of oxaloacetate into pyruvate. Seems to play a role in maintaining cellular concentrations of bicarbonate and pyruvate. This chain is Oxaloacetate decarboxylase, found in Pseudomonas savastanoi pv. phaseolicola (strain 1448A / Race 6) (Pseudomonas syringae pv. phaseolicola (strain 1448A / Race 6)).